A 437-amino-acid polypeptide reads, in one-letter code: Interactor protein for cytohesin exchange factors 1 (437 aa).

The region spanning 41–140 (HADCQGWLYK…WLNKLGSAVI (100 aa)) is the PH domain. 2 disordered regions span residues 143–225 (ESTT…PDTV) and 273–307 (LSSD…ETKV). Residues 151–162 (CYSESEQEDPEI) show a composition bias toward acidic residues. Positions 172–200 (ASQTQSLTAQQASSSSPSLSGTSYSFSSL) are enriched in low complexity. Residues 201–214 (ENTVKTPSSFPSSL) show a composition bias toward polar residues. The segment covering 273-283 (LSSDDTSSLSS) has biased composition (low complexity). 2 CRAC domain regions span residues 315 to 320 (KLYKSL) and 339 to 348 (LRKSFVKRCK). The tract at residues 389–437 (KYREWKVMNTLLIQDIYQQQRASPAPDDTDDTPQELKKSPSSPSVENSI) is required for interaction with CYTH2. The segment at 406 to 437 (QQQRASPAPDDTDDTPQELKKSPSSPSVENSI) is disordered. The residue at position 411 (S411) is a Phosphoserine. The span at 427 to 437 (SPSSPSVENSI) shows a compositional bias: polar residues.

As to quaternary structure, interacts with guanine-nucleotide exchange factors PSCD1, PSCD2, PSCD3 and PSCD4. Interacts (via C-terminus) with cytohesin-2 CYTH2.

The protein localises to the cytoplasm. Its subcellular location is the cell membrane. Its function is as follows. Enhances the promotion of guanine-nucleotide exchange by PSCD2 on ARF6 in a concentration-dependent manner. In Homo sapiens (Human), this protein is Interactor protein for cytohesin exchange factors 1 (IPCEF1).